Consider the following 174-residue polypeptide: Protein SHI RELATED SEQUENCE 3 (174 aa).

Residues Cys9, Cys12, Cys20, Cys25, Cys29, and Cys36 each coordinate Zn(2+). Residues 9-36 constitute a DNA-binding region (zn(2)-C6 fungal-type; degenerate); the sequence is CEDCGNQAKKDCVYMRCRTCCKSKAFHC. The short motif at 110–113 is the Required for homo- and heterodimerization element; the sequence is IGGH.

It belongs to the SHI protein family.

It is found in the nucleus. Transcription activator that binds DNA on 5'-ACTCTAC-3' and promotes auxin homeostasis-regulating gene expression (e.g. YUC genes), as well as genes affecting stamen development, cell expansion and timing of flowering. Synergistically with other SHI-related proteins, regulates gynoecium, stamen and leaf development in a dose-dependent manner, controlling apical-basal patterning. Promotes style and stigma formation, and influences vascular development during gynoecium development. May also have a role in the formation and/or maintenance of the shoot apical meristem (SAM). The chain is Protein SHI RELATED SEQUENCE 3 (SRS3) from Arabidopsis thaliana (Mouse-ear cress).